Reading from the N-terminus, the 102-residue chain is Aspartyl/glutamyl-tRNA(Asn/Gln) amidotransferase subunit C (102 aa).

The protein belongs to the GatC family. As to quaternary structure, heterotrimer of A, B and C subunits.

It catalyses the reaction L-glutamyl-tRNA(Gln) + L-glutamine + ATP + H2O = L-glutaminyl-tRNA(Gln) + L-glutamate + ADP + phosphate + H(+). The enzyme catalyses L-aspartyl-tRNA(Asn) + L-glutamine + ATP + H2O = L-asparaginyl-tRNA(Asn) + L-glutamate + ADP + phosphate + 2 H(+). Allows the formation of correctly charged Asn-tRNA(Asn) or Gln-tRNA(Gln) through the transamidation of misacylated Asp-tRNA(Asn) or Glu-tRNA(Gln) in organisms which lack either or both of asparaginyl-tRNA or glutaminyl-tRNA synthetases. The reaction takes place in the presence of glutamine and ATP through an activated phospho-Asp-tRNA(Asn) or phospho-Glu-tRNA(Gln). The protein is Aspartyl/glutamyl-tRNA(Asn/Gln) amidotransferase subunit C of Bordetella avium (strain 197N).